Consider the following 141-residue polypeptide: Hemoglobin subunit alpha-D (141 aa).

In terms of domain architecture, Globin spans 1–141 (MLNAEDKKLI…VSAVLAEKYR (141 aa)). Residues histidine 58 and histidine 87 each coordinate heme b.

The protein belongs to the globin family. As to quaternary structure, heterotetramer of two alpha-D chains and two beta chains. Red blood cells.

Functionally, involved in oxygen transport from the lung to the various peripheral tissues. The protein is Hemoglobin subunit alpha-D (HBAD) of Phasianus colchicus colchicus (Black-necked pheasant).